We begin with the raw amino-acid sequence, 273 residues long: 4-hydroxybenzoate octaprenyltransferase (273 aa).

Helical transmembrane passes span 7-27 (IGIY…SEGF), 30-50 (LKLL…GCVI), 83-103 (FFVL…WLTI), 122-142 (WTYF…LMAF), 146-166 (LNEI…WTVI), 197-217 (LIIG…SNVF), 221-241 (ISYH…QYLI), and 253-273 (FLHN…SVGL).

The protein belongs to the UbiA prenyltransferase family. The cofactor is Mg(2+).

Its subcellular location is the cell inner membrane. The catalysed reaction is all-trans-octaprenyl diphosphate + 4-hydroxybenzoate = 4-hydroxy-3-(all-trans-octaprenyl)benzoate + diphosphate. The protein operates within cofactor biosynthesis; ubiquinone biosynthesis. Functionally, catalyzes the prenylation of para-hydroxybenzoate (PHB) with an all-trans polyprenyl group. Mediates the second step in the final reaction sequence of ubiquinone-8 (UQ-8) biosynthesis, which is the condensation of the polyisoprenoid side chain with PHB, generating the first membrane-bound Q intermediate 3-octaprenyl-4-hydroxybenzoate. The chain is 4-hydroxybenzoate octaprenyltransferase from Vesicomyosocius okutanii subsp. Calyptogena okutanii (strain HA).